We begin with the raw amino-acid sequence, 307 residues long: Oxygen-dependent coproporphyrinogen-III oxidase (307 aa).

Residue Ser99 coordinates substrate. A divalent metal cation is bound by residues His103 and His113. Residue His113 is the Proton donor of the active site. Substrate is bound at residue 115–117 (NVR). Positions 152 and 182 each coordinate a divalent metal cation. Residues 247–282 (YVEFNLVFDRGTLFGLQSGGRTESILMSMPPVANWR) form an important for dimerization region. 265-267 (GGR) lines the substrate pocket.

It belongs to the aerobic coproporphyrinogen-III oxidase family. Homodimer. Requires a divalent metal cation as cofactor.

The protein resides in the cytoplasm. The catalysed reaction is coproporphyrinogen III + O2 + 2 H(+) = protoporphyrinogen IX + 2 CO2 + 2 H2O. It participates in porphyrin-containing compound metabolism; protoporphyrin-IX biosynthesis; protoporphyrinogen-IX from coproporphyrinogen-III (O2 route): step 1/1. Involved in the heme biosynthesis. Catalyzes the aerobic oxidative decarboxylation of propionate groups of rings A and B of coproporphyrinogen-III to yield the vinyl groups in protoporphyrinogen-IX. The sequence is that of Oxygen-dependent coproporphyrinogen-III oxidase from Burkholderia orbicola (strain MC0-3).